The chain runs to 290 residues: ATP synthase gamma chain (290 aa).

This sequence belongs to the ATPase gamma chain family. As to quaternary structure, F-type ATPases have 2 components, CF(1) - the catalytic core - and CF(0) - the membrane proton channel. CF(1) has five subunits: alpha(3), beta(3), gamma(1), delta(1), epsilon(1). CF(0) has three main subunits: a, b and c.

It localises to the cell inner membrane. Functionally, produces ATP from ADP in the presence of a proton gradient across the membrane. The gamma chain is believed to be important in regulating ATPase activity and the flow of protons through the CF(0) complex. The chain is ATP synthase gamma chain from Phenylobacterium zucineum (strain HLK1).